Consider the following 154-residue polypeptide: Endoribonuclease YbeY (154 aa).

H113, H117, and H123 together coordinate Zn(2+).

The protein belongs to the endoribonuclease YbeY family. Requires Zn(2+) as cofactor.

Its subcellular location is the cytoplasm. Single strand-specific metallo-endoribonuclease involved in late-stage 70S ribosome quality control and in maturation of the 3' terminus of the 16S rRNA. The polypeptide is Endoribonuclease YbeY (Vibrio cholerae serotype O1 (strain ATCC 39315 / El Tor Inaba N16961)).